A 168-amino-acid polypeptide reads, in one-letter code: Large ribosomal subunit protein bL9 (168 aa).

Residues 148 to 168 (ENGEGSVQPAAEAAEVASTEA) are disordered. Residues 157–168 (AAEAAEVASTEA) show a composition bias toward low complexity.

It belongs to the bacterial ribosomal protein bL9 family.

Functionally, binds to the 23S rRNA. This is Large ribosomal subunit protein bL9 from Herpetosiphon aurantiacus (strain ATCC 23779 / DSM 785 / 114-95).